The following is a 508-amino-acid chain: Enhancer of mRNA-decapping protein 3 (508 aa).

Residues 1–68 (MAADWLGSIV…ITELKILEIP (68 aa)) form the Sm domain. The tract at residues 1–79 (MAADWLGSIV…PGGNQHFGDV (79 aa)) is required for P-body targeting and interaction with DCP1A. The disordered stretch occupies residues 95-192 (ISQNGTGKLV…QMKNKDDECF (98 aa)). 4 positions are modified to phosphoserine: serine 131, serine 138, serine 140, and serine 161. The tract at residues 191–296 (CFGDDIEEIP…HKKLLSVAEK (106 aa)) is required for interaction with DDX6. The DFDF domain maps to 192 to 228 (FGDDIEEIPDTDFDFEGNLALFDKAAVFEEIGTYERR). One can recognise a YjeF N-terminal domain in the interval 283–487 (SYEQHKKLLS…DIGIPQQVFQ (205 aa)).

The protein belongs to the EDC3 family. In terms of assembly, homodimer (via YjeF N-terminal domain). Forms a complex with DCP1A, DCP2, DDX6 and EDC4/HEDLS, within this complex directly interacts with DCP1A and DDX6. Interacts with ZFP36.

The protein localises to the cytoplasm. Its subcellular location is the P-body. In terms of biological role, binds single-stranded RNA. Involved in the process of mRNA degradation and in the positive regulation of mRNA decapping. The chain is Enhancer of mRNA-decapping protein 3 (EDC3) from Macaca fascicularis (Crab-eating macaque).